The sequence spans 896 residues: Desmocollin-3 (896 aa).

Positions 1 to 26 (MAAPGSGAPCAELCRQLLLTLVVFSF) are cleaved as a signal peptide. A propeptide spanning residues 27-134 (ACEACKKEIF…KETVLRRSKR (108 aa)) is cleaved from the precursor. 5 consecutive Cadherin domains span residues 135–242 (RWAP…HPIF), 243–354 (TEAV…LPTF), 355–471 (RQNA…GPEC), 472–579 (SPEV…EILQ), and 580–690 (DYLV…ILGK). Residues 135 to 690 (RWAPIPCSMQ…RRSADVILGK (556 aa)) are Extracellular-facing. The N-linked (GlcNAc...) asparagine glycan is linked to asparagine 165. N-linked (GlcNAc...) asparagine glycans are attached at residues asparagine 391, asparagine 546, and asparagine 629. Residues 691 to 711 (WAILAILLGIALLFSILLTLV) traverse the membrane as a helical segment. At 712-896 (CGIVSARNKK…AALAKTCTKR (185 aa)) the chain is on the cytoplasmic side.

May form homodimers. Interacts with DSG1; there is evidence to suggest that the interaction promotes cell-cell adhesion of keratinocytes. Expressed in stratified epithelia only, such as the epidermis, tongue, esophagus and rumen (at protein level).

It is found in the cell membrane. The protein resides in the cell junction. The protein localises to the desmosome. It localises to the cytoplasm. Its function is as follows. A component of desmosome cell-cell junctions which are required for positive regulation of cellular adhesion. Required for cell-cell adhesion in the epidermis, as a result required for the maintenance of the dermal cohesion and the dermal barrier function. Required for cell-cell adhesion of epithelial cell layers surrounding the telogen hair club, as a result plays an important role in telogen hair shaft anchorage. Essential for successful completion of embryo compaction and embryo development. The sequence is that of Desmocollin-3 (DSC3) from Bos taurus (Bovine).